Reading from the N-terminus, the 312-residue chain is Ribosomal RNA small subunit methyltransferase H (312 aa).

S-adenosyl-L-methionine is bound by residues 30–32 (GGH), Asp-50, Phe-80, Asp-98, and Gln-105.

The protein belongs to the methyltransferase superfamily. RsmH family.

The protein localises to the cytoplasm. The enzyme catalyses cytidine(1402) in 16S rRNA + S-adenosyl-L-methionine = N(4)-methylcytidine(1402) in 16S rRNA + S-adenosyl-L-homocysteine + H(+). Its function is as follows. Specifically methylates the N4 position of cytidine in position 1402 (C1402) of 16S rRNA. In Lawsonia intracellularis (strain PHE/MN1-00), this protein is Ribosomal RNA small subunit methyltransferase H.